The following is an 89-amino-acid chain: Putative sodium channel toxin Ts30 (89 aa).

The first 17 residues, 1–17 (MFKLAIILALLFFGARA), serve as a signal peptide directing secretion. An LCN-type CS-alpha/beta domain is found at 21 to 85 (RDGYPILSDG…FGDSGTPECH (65 aa)). Intrachain disulfides connect cysteine 31/cysteine 84, cysteine 35/cysteine 59, cysteine 44/cysteine 64, and cysteine 48/cysteine 66.

Expressed by the venom gland.

It localises to the secreted. In Tityus serrulatus (Brazilian scorpion), this protein is Putative sodium channel toxin Ts30.